The sequence spans 391 residues: L-tryptophan--pyruvate aminotransferase 1 (391 aa).

Pyridoxal 5'-phosphate contacts are provided by residues Y58, S100 to T101, N168, D191 to Y194, T214 to K217, and R225. K217 carries the N6-(pyridoxal phosphate)lysine modification.

Belongs to the alliinase family. Requires pyridoxal 5'-phosphate as cofactor. As to expression, expressed at the leaf margin and in the vasculature of emerging young leaves. Expressed in the quiescent center and in the vasculature of root tips. Detected in the shoot apical meristem, stems, sepals, stamen filaments, the shoot and root junction, the stigma and the base of the silique.

It localises to the cytoplasm. It carries out the reaction L-tryptophan + 2-oxoglutarate = indole-3-pyruvate + L-glutamate. It catalyses the reaction L-tryptophan + pyruvate = indole-3-pyruvate + L-alanine. It participates in plant hormone metabolism; auxin biosynthesis. Its activity is regulated as follows. Inhibited by L-kynurenine. Functionally, L-tryptophan aminotransferase involved in auxin (IAA) biosynthesis. Can convert L-tryptophan and pyruvate to indole-3-pyruvic acid (IPA) and alanine. Catalyzes the first step in IPA branch of the auxin biosynthetic pathway. Required for auxin production to initiate multiple change in growth in response to environmental and developmental cues. It is also active with phenylalanine, tyrosine, leucine, alanine, methionine and glutamine. Both TAA1 and TAR2 are required for maintaining proper auxin levels in roots, while TAA1, TAR1 and TAR2 are required for proper embryo patterning. Involved in the maintenance of the root stem cell niches and required for shade avoidance. This is L-tryptophan--pyruvate aminotransferase 1 (TAA1) from Arabidopsis thaliana (Mouse-ear cress).